The primary structure comprises 616 residues: Dihydroxy-acid dehydratase (616 aa).

Asp-81 serves as a coordination point for Mg(2+). Position 122 (Cys-122) interacts with [2Fe-2S] cluster. Mg(2+) is bound by residues Asp-123 and Lys-124. Lys-124 carries the N6-carboxylysine modification. A [2Fe-2S] cluster-binding site is contributed by Cys-195. Mg(2+) is bound at residue Glu-491. Catalysis depends on Ser-517, which acts as the Proton acceptor.

Belongs to the IlvD/Edd family. Homodimer. [2Fe-2S] cluster serves as cofactor. Mg(2+) is required as a cofactor.

It carries out the reaction (2R)-2,3-dihydroxy-3-methylbutanoate = 3-methyl-2-oxobutanoate + H2O. The enzyme catalyses (2R,3R)-2,3-dihydroxy-3-methylpentanoate = (S)-3-methyl-2-oxopentanoate + H2O. It participates in amino-acid biosynthesis; L-isoleucine biosynthesis; L-isoleucine from 2-oxobutanoate: step 3/4. It functions in the pathway amino-acid biosynthesis; L-valine biosynthesis; L-valine from pyruvate: step 3/4. Functions in the biosynthesis of branched-chain amino acids. Catalyzes the dehydration of (2R,3R)-2,3-dihydroxy-3-methylpentanoate (2,3-dihydroxy-3-methylvalerate) into 2-oxo-3-methylpentanoate (2-oxo-3-methylvalerate) and of (2R)-2,3-dihydroxy-3-methylbutanoate (2,3-dihydroxyisovalerate) into 2-oxo-3-methylbutanoate (2-oxoisovalerate), the penultimate precursor to L-isoleucine and L-valine, respectively. The protein is Dihydroxy-acid dehydratase of Escherichia coli O81 (strain ED1a).